Reading from the N-terminus, the 408-residue chain is RUN domain-containing protein 3B (408 aa).

Positions 1 to 25 (MASRSLGGLSGSRGGGGGGGGKKSL) are disordered. The segment covering 8-22 (GLSGSRGGGGGGGGK) has biased composition (gly residues). Omega-N-methylarginine is present on R13. The 133-residue stretch at 58–190 (DDSSPEFNNF…IDFSFCLKGE (133 aa)) folds into the RUN domain. Positions 213-238 (DSISSDEEELRTFGSSDSESSTPENV) are disordered. 2 positions are modified to phosphoserine: S216 and S217. Over residues 225 to 236 (FGSSDSESSTPE) the composition is skewed to polar residues. Residues 301–326 (AHKLEKEQLEYIIVELQDQLKSYQSL) adopt a coiled-coil conformation. The interval 337–359 (QASLDPSHSQEGDGKQDSLNFIG) is disordered.

The protein belongs to the RUNDC3 family. In terms of assembly, interacts with RAP2A.

This chain is RUN domain-containing protein 3B (Rundc3b), found in Mus musculus (Mouse).